Reading from the N-terminus, the 900-residue chain is Suppressor of activated egl-4 protein 1 (900 aa).

3 disordered regions span residues 1-75 (MPPP…HLPT), 340-380 (PVAE…SRKN), and 406-425 (WAST…ESLE). Positions 53–75 (ASGQQHRPSIMSGQSHQNNHLPT) are enriched in polar residues. Composition is skewed to basic and acidic residues over residues 358–377 (GDMK…DGPS) and 412–425 (ADEK…ESLE). The 94-residue stretch at 451-544 (PHINLGKNYQ…AAVEDLLRSD (94 aa)) folds into the ELM2 domain. In terms of domain architecture, SANT spans 560-611 (NDSVLWTPDEIYQFQDAIYQSEKDFDKVAVELPGKSVKECVQFYYTWKKDCP). The interval 710–729 (PTAPRAHHTPSASASKKGAQ) is disordered. The C2H2-type zinc-finger motif lies at 736 to 758 (FHCRLCDKCFEKVKSLNAHMKSH).

In terms of assembly, may be a component of a histone deacetylase complex containing saeg-2, saeg-1 and hda-2. May interact with egl-4. Ubiquitously expressed.

Its subcellular location is the nucleus. Its function is as follows. As a likely component of a histone deacetylase complex, together with saeg-2 and hda-2, functions downstream of the cAMP-dependent kinase egl-4 to regulate the expression of genes required for egg-laying and foraging. The protein is Suppressor of activated egl-4 protein 1 of Caenorhabditis elegans.